Consider the following 986-residue polypeptide: Translation initiation factor IF-2 (986 aa).

The segment covering 49-59 (EFAKDNAKGDS) has biased composition (basic and acidic residues). The disordered stretch occupies residues 49–370 (EFAKDNAKGD…KNRLAKRHEY (322 aa)). The span at 60 to 112 (KPASSAQKPAAKPVQQRRPAAPSAPASTSSSAPTPAAPARQASPASAHQQAPT) shows a compositional bias: low complexity. Over residues 135-168 (GQHDNRENGRDNREGRENGRQSRPNDRRNNDRRN) the composition is skewed to basic and acidic residues. Residues 170 to 182 (QGRPNNGQPGQHQ) show a composition bias toward low complexity. 2 stretches are compositionally biased toward gly residues: residues 254–286 (GRGG…GGPR) and 296–353 (GQGG…GRQG). Residues 357 to 366 (SKARKNRLAK) show a composition bias toward basic residues. The tr-type G domain occupies 479 to 651 (PRPPVVTVMG…VLLTADAELD (173 aa)). Residues 488–495 (GHVDHGKT) are G1. 488–495 (GHVDHGKT) contacts GTP. Residues 513–517 (GITQR) form a G2 region. Residues 538–541 (DTPG) are G3. GTP contacts are provided by residues 538–542 (DTPGH) and 592–595 (NKID). The G4 stretch occupies residues 592–595 (NKID). The segment at 628–630 (SAK) is G5.

This sequence belongs to the TRAFAC class translation factor GTPase superfamily. Classic translation factor GTPase family. IF-2 subfamily.

It localises to the cytoplasm. In terms of biological role, one of the essential components for the initiation of protein synthesis. Protects formylmethionyl-tRNA from spontaneous hydrolysis and promotes its binding to the 30S ribosomal subunits. Also involved in the hydrolysis of GTP during the formation of the 70S ribosomal complex. The protein is Translation initiation factor IF-2 of Bifidobacterium longum subsp. infantis (strain ATCC 15697 / DSM 20088 / JCM 1222 / NCTC 11817 / S12).